A 489-amino-acid polypeptide reads, in one-letter code: Virion host shutoff protein (489 aa).

Disordered stretches follow at residues 110–135, 142–161, 285–316, and 333–363; these read EEASDVDASPPPSPITDSRPSSAFSN, SLASGTRGTAGSGAALPSAA, RSQTRRAIRREHTSSRSTETRPPLPPAAGGTE, and YEDDEDLPLDPRDVTGGHPGPRSSSSEILTP. Over residues 124-134 the composition is skewed to polar residues; the sequence is ITDSRPSSAFS.

It belongs to the herpesviridae VHS protein family. Interacts with human EIF4H, EIF4A1 and EIF4A2; interaction with eIF4AI and EIF4A2 presumably allows Vhs protein to associate with the eIF4F cap-binding complex.

Its subcellular location is the virion. In terms of biological role, minor structural protein that acts as an endoribonuclease during lytic infection. Degrades host mRNAs in the cytoplasm by cutting them at preferred sites, including some in regions of translation initiation. Together with inhibition of host splicing by ICP27, contributes to an overall decrease in host protein synthesis. Also, after the onset of viral transcription, accelerates the turnover of viral mRNA, thereby facilitating the sequential expression of different classes of viral genes. Binds translation initiation factors eIF4H, eIF4AI, and eIF4AII, thereby may interact directly with the translation initiation complex and thus digest specifically mRNAs. Also impedes antigen presentation by major histocompatibility complex class I and class II molecules, inhibits secretion of cytokines that would otherwise recruit lymphocytes and neutrophils cells to the site of infection and blocks the activation of dendritic cells. Impedes the alpha/beta interferon-mediated response to infection by evading the cGAS/ STING-mediated DNA-sensing pathway and degrading CGAS via its RNase activity. This is Virion host shutoff protein (UL41) from Human herpesvirus 1 (strain KOS) (HHV-1).